The following is a 202-amino-acid chain: Proteasome subunit beta 1 (202 aa).

A propeptide (removed in mature form; by autocatalysis) is located at residue methionine 1. The active-site Nucleophile is the threonine 2.

The protein belongs to the peptidase T1B family. In terms of assembly, the 20S proteasome core is composed of 14 alpha and 14 beta subunits that assemble into four stacked heptameric rings, resulting in a barrel-shaped structure. The two inner rings, each composed of seven catalytic beta subunits, are sandwiched by two outer rings, each composed of seven alpha subunits. The catalytic chamber with the active sites is on the inside of the barrel. Has a gated structure, the ends of the cylinder being occluded by the N-termini of the alpha-subunits. Is capped at one or both ends by the proteasome regulatory ATPase, PAN.

The protein localises to the cytoplasm. It catalyses the reaction Cleavage of peptide bonds with very broad specificity.. With respect to regulation, the formation of the proteasomal ATPase PAN-20S proteasome complex, via the docking of the C-termini of PAN into the intersubunit pockets in the alpha-rings, triggers opening of the gate for substrate entry. Interconversion between the open-gate and close-gate conformations leads to a dynamic regulation of the 20S proteasome proteolysis activity. Its function is as follows. Component of the proteasome core, a large protease complex with broad specificity involved in protein degradation. This is Proteasome subunit beta 1 from Pyrobaculum aerophilum (strain ATCC 51768 / DSM 7523 / JCM 9630 / CIP 104966 / NBRC 100827 / IM2).